The sequence spans 221 residues: Small histidine-alanine-rich protein (221 aa).

The signal sequence occupies residues 1 to 21 (MVSFSKNKILSAAVFASVLLL). Over residues 52–67 (AHAGDAHHAHHVADAH) the composition is skewed to basic and acidic residues. 2 disordered regions span residues 52–141 (AHAG…AANA) and 180–221 (AHHD…HLHH). Repeat copies occupy residues 57 to 59 (AHH) and 60 to 62 (AHH). A 4 X 3 AA approximate tandem repeats of A-H-H region spans residues 57-68 (AHHAHHVADAHH). The stretch at 63–65 (VAD) is one 1-3; approximate repeat. A run of 13 repeats spans residues 66–68 (AHH), 69–74 (AHHAAN), 75–80 (AHHAAN), 81–86 (AHHAAN), 87–92 (AHHAAN), 93–98 (AHHAAN), 99–104 (AHHAAN), 105–110 (AHHAAN), 111–116 (AHHAAN), 117–122 (AHHAAN), 123–128 (AHHAAN), 129–134 (AHHAAN), and 135–140 (AHHAAN). A 13 X 6 AA approximate tandem repeats of A-H-H-A-A-N region spans residues 69–146 (AHHAANAHHA…HAANAHHAAD (78 aa)). The segment covering 75–141 (AHHAANAHHA…AANAHHAANA (67 aa)) has biased composition (low complexity). The 2-13; approximate repeat unit spans residues 141–146 (AHHAAD). Repeat copies occupy residues 176 to 180 (HHDDA), 181 to 185 (HHDGA), 186 to 190 (HHDDA), 191 to 195 (HHDGA), 196 to 200 (HHDGA), 201 to 205 (HHDGA), and 206 to 210 (HHDGA). The tract at residues 176–210 (HHDDAHHDGAHHDDAHHDGAHHDGAHHDGAHHDGA) is 7 X 5 AA tandem repeats of H-H-D-[DG]-A. The span at 180 to 211 (AHHDGAHHDDAHHDGAHHDGAHHDGAHHDGAH) shows a compositional bias: basic and acidic residues.

This is Small histidine-alanine-rich protein from Plasmodium falciparum (isolate FC27 / Papua New Guinea).